A 213-amino-acid polypeptide reads, in one-letter code: Maleylacetoacetate isomerase (213 aa).

Residues 3-84 (NETVLYDYWR…YLAETRDGTG (82 aa)) form the GST N-terminal domain. A GST C-terminal domain is found at 89 to 213 (HPIDRQRVRA…QRAHPDRAKP (125 aa)).

The protein belongs to the GST superfamily. Zeta family.

It carries out the reaction 4-maleylacetoacetate = 4-fumarylacetoacetate. The protein operates within amino-acid degradation; L-phenylalanine degradation; acetoacetate and fumarate from L-phenylalanine: step 5/6. This is Maleylacetoacetate isomerase (maiA) from Rhizobium meliloti (strain 1021) (Ensifer meliloti).